The chain runs to 27 residues: Pregnancy-associated glycoprotein 55 (27 aa).

Belongs to the peptidase A1 family. Post-translationally, glycosylated. In terms of tissue distribution, placenta.

This chain is Pregnancy-associated glycoprotein 55 (PAG55), found in Capra hircus (Goat).